Reading from the N-terminus, the 219-residue chain is Probable cutinase 4 (219 aa).

The first 17 residues, 1–17 (MILPSLLVASLSALAAA), serve as a signal peptide directing secretion. Disulfide bonds link C41–C120 and C67–C81. N99 is a glycosylation site (N-linked (GlcNAc...) asparagine). Catalysis depends on S131, which acts as the Nucleophile. C182 and C189 form a disulfide bridge. Residue D186 is part of the active site. H199 functions as the Proton donor/acceptor in the catalytic mechanism.

Belongs to the cutinase family.

It localises to the secreted. It carries out the reaction cutin + H2O = cutin monomers.. In terms of biological role, catalyzes the hydrolysis of complex carboxylic polyesters found in the cell wall of plants. Degrades cutin, a macromolecule that forms the structure of the plant cuticle. In Aspergillus terreus (strain NIH 2624 / FGSC A1156), this protein is Probable cutinase 4.